The following is a 501-amino-acid chain: ATP-dependent rRNA helicase RRP3 (501 aa).

A coiled-coil region spans residues 3 to 44; it reads KIVKRKEKKANDELTSLAEKIRAKALENQKKLIEAEKEGGSE. A disordered region spans residues 36-79; the sequence is EAEKEGGSESDSEEDATAEKKKVLKSKSKSTVSTQNENTNEDES. Ser43, Ser45, and Ser47 each carry phosphoserine. The Q motif motif lies at 81–109; the sequence is ESFSELNLVPELIQACKNLNYSKPTPIQS. The region spanning 112–284 is the Helicase ATP-binding domain; it reads IPPALEGHDI…RASLTNPVKC (173 aa). 125–132 contributes to the ATP binding site; the sequence is AQTGSGKT. The short motif at 231 to 234 is the DEAD box element; it reads DEAD. Positions 307-461 constitute a Helicase C-terminal domain; that stretch reads LKNTYLIYLL…NIILTLRDSV (155 aa). Residues 480 to 501 are disordered; that stretch reads IARGKGRRGRMMTRENMDMGER. Positions 491 to 501 are enriched in basic and acidic residues; the sequence is MTRENMDMGER.

This sequence belongs to the DEAD box helicase family. DDX47/RRP3 subfamily. As to quaternary structure, interacts with the SSU processome.

It localises to the nucleus. The catalysed reaction is ATP + H2O = ADP + phosphate + H(+). ATPase activity is stimulated upon the addition of RNA. In terms of biological role, ATP-dependent rRNA helicase required for pre-ribosomal RNA processing. Involved in the maturation of the 35S-pre-rRNA and to its cleavage to mature 18S rRNA. In Saccharomyces cerevisiae (strain ATCC 204508 / S288c) (Baker's yeast), this protein is ATP-dependent rRNA helicase RRP3.